The following is a 263-amino-acid chain: 3-methyl-2-oxobutanoate hydroxymethyltransferase (263 aa).

Positions 44 and 83 each coordinate Mg(2+). 3-methyl-2-oxobutanoate contacts are provided by residues 44-45, D83, and K112; that span reads DS. E114 serves as a coordination point for Mg(2+). The Proton acceptor role is filled by E181.

It belongs to the PanB family. In terms of assembly, homodecamer; pentamer of dimers. The cofactor is Mg(2+).

The protein localises to the cytoplasm. The catalysed reaction is 3-methyl-2-oxobutanoate + (6R)-5,10-methylene-5,6,7,8-tetrahydrofolate + H2O = 2-dehydropantoate + (6S)-5,6,7,8-tetrahydrofolate. It participates in cofactor biosynthesis; (R)-pantothenate biosynthesis; (R)-pantoate from 3-methyl-2-oxobutanoate: step 1/2. Its function is as follows. Catalyzes the reversible reaction in which hydroxymethyl group from 5,10-methylenetetrahydrofolate is transferred onto alpha-ketoisovalerate to form ketopantoate. The sequence is that of 3-methyl-2-oxobutanoate hydroxymethyltransferase from Nitrosospira multiformis (strain ATCC 25196 / NCIMB 11849 / C 71).